The primary structure comprises 173 residues: MLGSTDLVLLGKVVATHGIRGQLSVVPFSGEFSTILSMQTVYLSGPDNRKESFEVDRAAVHRNRVLLTLKGFANINEVLHLVGRELFARRDQFPPLDEGEFYWCDLIGLSVTTSEGLSLGRIEEIIATGSNDVYVVRDGEREYLIPALEDIVVGVDLDKGIMTVSPTEGLLDL.

One can recognise a PRC barrel domain in the interval 98 to 170 (EGEFYWCDLI…IMTVSPTEGL (73 aa)).

It belongs to the RimM family. As to quaternary structure, binds ribosomal protein uS19.

The protein localises to the cytoplasm. Its function is as follows. An accessory protein needed during the final step in the assembly of 30S ribosomal subunit, possibly for assembly of the head region. Essential for efficient processing of 16S rRNA. May be needed both before and after RbfA during the maturation of 16S rRNA. It has affinity for free ribosomal 30S subunits but not for 70S ribosomes. This Geobacter metallireducens (strain ATCC 53774 / DSM 7210 / GS-15) protein is Ribosome maturation factor RimM.